Consider the following 110-residue polypeptide: UPF0060 membrane protein AHA_2410 (110 aa).

4 consecutive transmembrane segments (helical) span residues G8 to L28, S33 to L53, A63 to I83, and L87 to P107.

It belongs to the UPF0060 family.

It is found in the cell inner membrane. The polypeptide is UPF0060 membrane protein AHA_2410 (Aeromonas hydrophila subsp. hydrophila (strain ATCC 7966 / DSM 30187 / BCRC 13018 / CCUG 14551 / JCM 1027 / KCTC 2358 / NCIMB 9240 / NCTC 8049)).